The primary structure comprises 556 residues: MDIRRIVLYMALALIGLSLWNAWQIDYPAKQPVEEKTASQLTSDGHLLPQIIPSNAEQPVTLKAEEKASSGKQLIQVKTDILDVDIDLKNGDIVKGLLLDYPLSVEDKNKPFPLLQNQASQRYVANSSLFVLDGQTPQSLDFDFTSEKEYYELKPDQNQLIVTLNGKSEDGLDVKKEFVFTKGSYLIEVNYKIANIGNSLWKGYFNTQLLRSSPKEDKSSIFHIGSYTGASFSNPGKNRYQKVSFSDMSKSNLDVDAKGGWIAMQQHYFLSAWVPNADSENKFYTLATDKDYTIGAVSQPITVKPKEDKIVGSKLYIGPEITSVLKGISPSLDLTVDYGILWFLSSLLFSLMKAIYTVVGNWGWSIVLVTVLIKLAFYRLSATSYKSMASMRKLQPKLQALRERYGDDKAKISQATMELYKQEKVNPLGGCLPILIQIPVFIALYWVLLESVELRQAPFIFWINDLASADPYHVLPLIMGATMLIQQKLNPAPADPMQAKVMMFLPILFTGLFWNFPSGLVLYWIVNNTLSILQQWYITRKYSDEKPAKKVVATAK.

Helical transmembrane passes span 6–26 (IVLY…WQID), 332–352 (LDLT…FSLM), 358–378 (VVGN…LAFY), 428–448 (LGGC…YWVL), and 501–521 (VMMF…SGLV).

Belongs to the OXA1/ALB3/YidC family. Type 1 subfamily. Interacts with the Sec translocase complex via SecD. Specifically interacts with transmembrane segments of nascent integral membrane proteins during membrane integration.

It localises to the cell inner membrane. Its function is as follows. Required for the insertion and/or proper folding and/or complex formation of integral membrane proteins into the membrane. Involved in integration of membrane proteins that insert both dependently and independently of the Sec translocase complex, as well as at least some lipoproteins. Aids folding of multispanning membrane proteins. This is Membrane protein insertase YidC from Legionella pneumophila (strain Lens).